The chain runs to 159 residues: RNA pyrophosphohydrolase (159 aa).

In terms of domain architecture, Nudix hydrolase spans 6 to 149 (GYRPNVGIVI…KRNVYRRMMK (144 aa)). The short motif at 38–59 (GGINSGETAEQAMFRELFEEVG) is the Nudix box element.

It belongs to the Nudix hydrolase family. RppH subfamily. It depends on a divalent metal cation as a cofactor.

Accelerates the degradation of transcripts by removing pyrophosphate from the 5'-end of triphosphorylated RNA, leading to a more labile monophosphorylated state that can stimulate subsequent ribonuclease cleavage. In Baumannia cicadellinicola subsp. Homalodisca coagulata, this protein is RNA pyrophosphohydrolase.